Here is a 127-residue protein sequence, read N- to C-terminus: Biogenesis of lysosome-related organelles complex 1 subunit 2 (127 aa).

The protein belongs to the BLOC1S2 family. As to quaternary structure, component of the biogenesis of lysosome-related organelles complex-1 (BLOC-1). Interacts with BLOS1 and SNX1.

It localises to the cytoplasm. Its subcellular location is the endosome. Component of the biogenesis of lysosome-related organelles complex-1 (BLOC-1), a complex that mediates the vacuolar degradative transport via the intracellular vesicle trafficking from the endosome to the vacuole. The polypeptide is Biogenesis of lysosome-related organelles complex 1 subunit 2 (BLOS2) (Arabidopsis thaliana (Mouse-ear cress)).